A 764-amino-acid polypeptide reads, in one-letter code: Protective antigen (764 aa).

The signal sequence occupies residues 1–29 (MKKRKVLIPLMALSTILVSSTGNLEVIQA). A domain 1, calcium-binding; LF and EF binding sites region spans residues 30 to 287 (EVKQENRLLN…PEARHPLVAA (258 aa)). The 137-residue stretch at 43–179 (SSSQGLLGYY…NKKEVISSDN (137 aa)) folds into the PA14 domain. The segment at 176 to 214 (SSDNLQLPELKQKSSNSRKKRSTSAGPTVPDRDNDGIPD) is disordered. Residues Asp206, Asp208, Asp210, Ile212, and Glu217 each coordinate Ca(2+). An alpha-clamp region spans residues 231–239 (FLSPWISNI). 3 residues coordinate Ca(2+): Ser251, Lys254, and Asp264. Residues 288–516 (YPIVHVDMEN…SEVLPQIQET (229 aa)) form a domain 2, membrane insertion and heptamerization region. The disordered stretch occupies residues 302 to 333 (KNEDQSTQNTDSQTRTISKNTSTSRTHTSEVH). The span at 306–327 (QSTQNTDSQTRTISKNTSTSRT) shows a compositional bias: polar residues. The next 2 membrane-spanning stretches (beta stranded) occupy residues 331 to 342 (EVHGNAEVHASF) and 345 to 354 (IGGSVSAGFS). The segment at 517–624 (TARIIFNGKD…KMNILIRDKR (108 aa)) is domain 3, heptamerization. The segment at 625–764 (FHYDRNNIAV…IFSKKGYEIG (140 aa)) is domain 4, binding to the receptor.

The protein belongs to the bacterial binary toxin family. In terms of assembly, interacts with host ANTXR1 and ANTXR2. As to quaternary structure, homooligomer; homooligomerizes to form homoheptamers (PA-63(7)) or homooctamers (PA-63(8)). PA-63(7) or PA-63(8) form ring-shaped oligomers that are in a pre-pore conformation, which do not penetrate the host membrane. PA-63(8) displays an enhanced stability, suggesting that this form circulates in the blood to reach and exert toxicity even in distant tissues. Interacts with lethal factor (LF) and edema factor (EF); can bind LF and EF simultaneously and interaction takes place following homooligomerization on the host cell membrane. PA-63(7) homoheptamer interacts with three molecules of LF to form the PA(7)LF(3) complex, in which the relative position of the N-terminal alpha-helices in the three LFs determines which factor is translocated first. Post-translationally, proteolytic activation by FURIN cleaves the protein in two parts, PA-20 and PA-63; the latter is the mature protein. The cleavage occurs at the cell surface and probably in the serum of infected animals as well; both native and cleaved PA are able to bind to the cell receptor. The release of PA-20 from the remaining receptor-bound PA-63 exposes the binding site for EF and LF, and promotes oligomerization and internalization of the protein.

Its subcellular location is the secreted. The protein localises to the host cell membrane. It is found in the host endosome membrane. Its function is as follows. Protective antigen constitutes one of the three proteins composing the anthrax toxin; it mediates attachment to host cells and translocation of edema factor (EF) and lethal factor (LF) into the host cytoplasm. PA associated with LF forms the lethal toxin (LeTx) and causes death when injected; PA associated with EF forms the edema toxin (EdTx) and produces edema. PA induces immunity to infection with anthrax. Mediates the attachment to host cells by binding host cell receptors ANTXR1 and ANTXR2. Following host cell surface attachment, PA is cleaved by FURIN to generate the PA-63 (Protective antigen PA-63) form, which constitutes the mature form of the protein that oligomerizes and forms a pore to translocate the enzymatic toxin components edema factor (EF) and lethal factor (LF) into the host cytosol. In terms of biological role, mature form that oligomerizes and forms a pore to translocate the enzymatic toxin components edema factor (EF) and lethal factor (LF) into the host cytosol. Following attachment to host cell receptors and cleavage by FURIN, homooligomerizes to form ring-shaped oligomers that are in a pre-pore conformation, and associates with EF and LF. Toxin-leaded complexes are then endocytosed in a clathrin-dependent process, followed by a conformational change of oligomerized PA-63 from the pre-pore to pore state, which is triggered by the low pH in the endosome. Once active, the pore mediates unfolding of EF and LF, which pass through the pore and translocate into the host cytosol. This Bacillus anthracis protein is Protective antigen (pagA).